The following is a 231-amino-acid chain: Large ribosomal subunit protein uL1 (231 aa).

It belongs to the universal ribosomal protein uL1 family. In terms of assembly, part of the 50S ribosomal subunit.

Its function is as follows. Binds directly to 23S rRNA. The L1 stalk is quite mobile in the ribosome, and is involved in E site tRNA release. Functionally, protein L1 is also a translational repressor protein, it controls the translation of the L11 operon by binding to its mRNA. The polypeptide is Large ribosomal subunit protein uL1 (Beijerinckia indica subsp. indica (strain ATCC 9039 / DSM 1715 / NCIMB 8712)).